Consider the following 254-residue polypeptide: Imidazole glycerol phosphate synthase subunit HisF (254 aa).

Residues Asp-11 and Asp-130 contribute to the active site.

It belongs to the HisA/HisF family. Heterodimer of HisH and HisF.

The protein resides in the cytoplasm. The enzyme catalyses 5-[(5-phospho-1-deoxy-D-ribulos-1-ylimino)methylamino]-1-(5-phospho-beta-D-ribosyl)imidazole-4-carboxamide + L-glutamine = D-erythro-1-(imidazol-4-yl)glycerol 3-phosphate + 5-amino-1-(5-phospho-beta-D-ribosyl)imidazole-4-carboxamide + L-glutamate + H(+). It participates in amino-acid biosynthesis; L-histidine biosynthesis; L-histidine from 5-phospho-alpha-D-ribose 1-diphosphate: step 5/9. IGPS catalyzes the conversion of PRFAR and glutamine to IGP, AICAR and glutamate. The HisF subunit catalyzes the cyclization activity that produces IGP and AICAR from PRFAR using the ammonia provided by the HisH subunit. The protein is Imidazole glycerol phosphate synthase subunit HisF of Staphylococcus carnosus (strain TM300).